We begin with the raw amino-acid sequence, 288 residues long: HTH-type transcriptional regulator CzcR (288 aa).

The region spanning 1–58 is the HTH lysR-type domain; sequence MELRDLQIFQSVADQGSVSSAAKELNYVQSNVTARIKQLENELKTPLFYRHKRGMTLT. Residues 18–37 constitute a DNA-binding region (H-T-H motif); the sequence is VSSAAKELNYVQSNVTARIK.

This sequence belongs to the LysR transcriptional regulatory family.

The chain is HTH-type transcriptional regulator CzcR (czcR) from Bacillus anthracis.